Consider the following 299-residue polypeptide: uncharacterized protein (299 aa).

This is an uncharacterized protein from Archaeoglobus fulgidus (strain ATCC 49558 / DSM 4304 / JCM 9628 / NBRC 100126 / VC-16).